A 255-amino-acid chain; its full sequence is uncharacterized protein (255 aa).

Positions 253–255 match the Microbody targeting signal motif; the sequence is SKI.

It belongs to the enoyl-CoA hydratase/isomerase family.

It localises to the peroxisome. This is an uncharacterized protein from Caenorhabditis elegans.